The primary structure comprises 301 residues: Ribonuclease HIII (301 aa).

The 218-residue stretch at 84–301 folds into the RNase H type-2 domain; sequence ASAIGSDEVG…TEKAARIAKK (218 aa). Asp-90, Glu-91, and Asp-195 together coordinate a divalent metal cation.

Belongs to the RNase HII family. RnhC subfamily. Requires Mn(2+) as cofactor. Mg(2+) serves as cofactor.

It localises to the cytoplasm. The enzyme catalyses Endonucleolytic cleavage to 5'-phosphomonoester.. Its function is as follows. Endonuclease that specifically degrades the RNA of RNA-DNA hybrids. This is Ribonuclease HIII from Geobacillus sp. (strain WCH70).